The primary structure comprises 90 residues: U7-theraphotoxin-Hhn1g (90 aa).

Residues 1–19 form the signal peptide; it reads MKTAIFTVVLALAVFAVLS. Positions 20-50 are excised as a propeptide; sequence FGWEANEKALSEEFTELIHEKEAASETEARE. 3 cysteine pairs are disulfide-bonded: cysteine 51–cysteine 65, cysteine 58–cysteine 70, and cysteine 64–cysteine 81.

The protein belongs to the neurotoxin 10 (Hwtx-1) family. 13 (Hntx-13) subfamily. As to expression, expressed by the venom gland.

The protein localises to the secreted. In terms of biological role, ion channel inhibitor. This Cyriopagopus hainanus (Chinese bird spider) protein is U7-theraphotoxin-Hhn1g.